The chain runs to 499 residues: MTKDGGKKDNQGQDKKAQQYGVTPQSVDFNDWYNEVVKKADLADNSPVAGAMVVRPYGSALWENIQRWLDDRFKASGHESLIFPTLIPMNFIMKEADHVEGFAPELFTVNKIGTEELAEPYVMRPTSETIIGHMWSGWLNSYRDLPFLHYQWGSVFRAELRTKAFLRTSEFFWHEGHTAHADEAEARAEVRQQLDLYHEFCRDVLALPVVRGEKTASERFAGAVATYSIEGMMRDGKALQSGTSHYLGQNFSRAFDVKYQTREQKEEFAHTTSWAISSRIIGAIIMTHGDDSGLMMPPRIAPIQVVVIPVGRKDNFDQMVQEGEKLAAELRAQGLRVKVDGRDGVTNGFKYNDWELKGVPVRIELGPRDLESGVLVVKNRHSEDKETLPRAEAVSGMSARLDTIHDFLMKRATDFLLANTAEVDSYDAFQREIEAGHWVRAYHCGEPACEKSIKEDTKATARNVPFDDAEFFAERGEGQCVKCGQPSAYGKRVLFGRQY.

Over residues 1–17 the composition is skewed to basic and acidic residues; it reads MTKDGGKKDNQGQDKKA. Residues 1–21 form a disordered region; sequence MTKDGGKKDNQGQDKKAQQYG.

It belongs to the class-II aminoacyl-tRNA synthetase family. ProS type 3 subfamily. As to quaternary structure, homodimer.

The protein localises to the cytoplasm. The enzyme catalyses tRNA(Pro) + L-proline + ATP = L-prolyl-tRNA(Pro) + AMP + diphosphate. Catalyzes the attachment of proline to tRNA(Pro) in a two-step reaction: proline is first activated by ATP to form Pro-AMP and then transferred to the acceptor end of tRNA(Pro). Can inadvertently accommodate and process cysteine. This is Proline--tRNA ligase (proS) from Deinococcus radiodurans (strain ATCC 13939 / DSM 20539 / JCM 16871 / CCUG 27074 / LMG 4051 / NBRC 15346 / NCIMB 9279 / VKM B-1422 / R1).